Consider the following 153-residue polypeptide: 6,7-dimethyl-8-ribityllumazine synthase (153 aa).

5-amino-6-(D-ribitylamino)uracil contacts are provided by residues Phe22, 56 to 58, and 80 to 82; these read AFE and TVI. 85 to 86 provides a ligand contact to (2S)-2-hydroxy-3-oxobutyl phosphate; that stretch reads ST. His88 serves as the catalytic Proton donor. Phe113 contributes to the 5-amino-6-(D-ribitylamino)uracil binding site. Arg127 provides a ligand contact to (2S)-2-hydroxy-3-oxobutyl phosphate.

Belongs to the DMRL synthase family. As to quaternary structure, forms an icosahedral capsid composed of 60 subunits, arranged as a dodecamer of pentamers.

The catalysed reaction is (2S)-2-hydroxy-3-oxobutyl phosphate + 5-amino-6-(D-ribitylamino)uracil = 6,7-dimethyl-8-(1-D-ribityl)lumazine + phosphate + 2 H2O + H(+). Its pathway is cofactor biosynthesis; riboflavin biosynthesis; riboflavin from 2-hydroxy-3-oxobutyl phosphate and 5-amino-6-(D-ribitylamino)uracil: step 1/2. In terms of biological role, catalyzes the formation of 6,7-dimethyl-8-ribityllumazine by condensation of 5-amino-6-(D-ribitylamino)uracil with 3,4-dihydroxy-2-butanone 4-phosphate. This is the penultimate step in the biosynthesis of riboflavin. This is 6,7-dimethyl-8-ribityllumazine synthase from Actinobacillus pleuropneumoniae serotype 7 (strain AP76).